Here is a 184-residue protein sequence, read N- to C-terminus: 1,6-anhydro-N-acetylmuramyl-L-alanine amidase AmpD (184 aa).

The N-acetylmuramoyl-L-alanine amidase domain maps to 30 to 171; the sequence is QDISLLVIHY…ISPKRKIDPG (142 aa). His38 contributes to the Zn(2+) binding site. The active-site Proton acceptor is Glu120. Zn(2+) contacts are provided by His159 and Asp169.

Belongs to the N-acetylmuramoyl-L-alanine amidase 2 family. The cofactor is Zn(2+).

It localises to the cytoplasm. The enzyme catalyses Hydrolyzes the link between N-acetylmuramoyl residues and L-amino acid residues in certain cell-wall glycopeptides.. Functionally, involved in cell wall peptidoglycan recycling. Specifically cleaves the amide bond between the lactyl group of N-acetylmuramic acid and the alpha-amino group of the L-alanine in degradation products containing an anhydro N-acetylmuramyl moiety. This chain is 1,6-anhydro-N-acetylmuramyl-L-alanine amidase AmpD (ampD), found in Haemophilus influenzae (strain ATCC 51907 / DSM 11121 / KW20 / Rd).